A 355-amino-acid chain; its full sequence is Uroporphyrinogen decarboxylase (355 aa).

Residues 27–31, D77, Y154, T209, and H327 each bind substrate; that span reads RQAGR.

This sequence belongs to the uroporphyrinogen decarboxylase family. As to quaternary structure, homodimer.

It localises to the cytoplasm. It catalyses the reaction uroporphyrinogen III + 4 H(+) = coproporphyrinogen III + 4 CO2. It functions in the pathway porphyrin-containing compound metabolism; protoporphyrin-IX biosynthesis; coproporphyrinogen-III from 5-aminolevulinate: step 4/4. Its function is as follows. Catalyzes the decarboxylation of four acetate groups of uroporphyrinogen-III to yield coproporphyrinogen-III. In Yersinia enterocolitica serotype O:8 / biotype 1B (strain NCTC 13174 / 8081), this protein is Uroporphyrinogen decarboxylase.